The sequence spans 237 residues: Ribonuclease PH (237 aa).

Residues Arg-86 and 124 to 126 (GTR) contribute to the phosphate site.

It belongs to the RNase PH family. Homohexameric ring arranged as a trimer of dimers.

The enzyme catalyses tRNA(n+1) + phosphate = tRNA(n) + a ribonucleoside 5'-diphosphate. Its function is as follows. Phosphorolytic 3'-5' exoribonuclease that plays an important role in tRNA 3'-end maturation. Removes nucleotide residues following the 3'-CCA terminus of tRNAs; can also add nucleotides to the ends of RNA molecules by using nucleoside diphosphates as substrates, but this may not be physiologically important. Probably plays a role in initiation of 16S rRNA degradation (leading to ribosome degradation) during starvation. The chain is Ribonuclease PH from Bradyrhizobium diazoefficiens (strain JCM 10833 / BCRC 13528 / IAM 13628 / NBRC 14792 / USDA 110).